Consider the following 173-residue polypeptide: U1 small nuclear ribonucleoprotein C (173 aa).

Residues 4–36 form a Matrin-type zinc finger; it reads YYCDYCDTYLTHDSPSVRKTHCQGRKHKDNVKF. Positions 72 to 100 are disordered; sequence AAIPPPANMQGPPRPVPPGPMGPGPNMLG. Residues 73–94 are compositionally biased toward pro residues; it reads AIPPPANMQGPPRPVPPGPMGP.

The protein belongs to the U1 small nuclear ribonucleoprotein C family. In terms of assembly, U1 snRNP is composed of the 7 core Sm proteins B/B', D1, D2, D3, E, F and G that assemble in a heptameric protein ring on the Sm site of the small nuclear RNA to form the core snRNP, and at least 3 U1 snRNP-specific proteins U1-70K, U1-A and U1-C. U1-C interacts with U1 snRNA and the 5' splice-site region of the pre-mRNA.

The protein localises to the nucleus. Functionally, component of the spliceosomal U1 snRNP, which is essential for recognition of the pre-mRNA 5' splice-site and the subsequent assembly of the spliceosome. U1-C is directly involved in initial 5' splice-site recognition for both constitutive and regulated alternative splicing. The interaction with the 5' splice-site seems to precede base-pairing between the pre-mRNA and the U1 snRNA. Stimulates commitment or early (E) complex formation by stabilizing the base pairing of the 5' end of the U1 snRNA and the 5' splice-site region. In Pediculus humanus subsp. corporis (Body louse), this protein is U1 small nuclear ribonucleoprotein C.